A 250-amino-acid polypeptide reads, in one-letter code: Ribonuclease PH (250 aa).

Phosphate contacts are provided by residues R99 and 137–139 (GTR).

The protein belongs to the RNase PH family. Homohexameric ring arranged as a trimer of dimers.

The enzyme catalyses tRNA(n+1) + phosphate = tRNA(n) + a ribonucleoside 5'-diphosphate. Its function is as follows. Phosphorolytic 3'-5' exoribonuclease that plays an important role in tRNA 3'-end maturation. Removes nucleotide residues following the 3'-CCA terminus of tRNAs; can also add nucleotides to the ends of RNA molecules by using nucleoside diphosphates as substrates, but this may not be physiologically important. Probably plays a role in initiation of 16S rRNA degradation (leading to ribosome degradation) during starvation. This Bordetella parapertussis (strain 12822 / ATCC BAA-587 / NCTC 13253) protein is Ribonuclease PH.